The sequence spans 360 residues: MAGHLTSDFAFSPPPGGGGDGPGGPEPGWVDPRTWLSFQGPPGGPGIGPGVGPGSEVWGIPPCPPPYEFCGGMAYCGPQVGVGLVPQGGLETSQPEGEAGVGVESNSDGASPEPCTVTPGAVKLEKEKLEQNPEESQDIKALQKELEQFAKLLKQKRITLGYTQADVGLTLGVLFGKVFSQTTICRFEALQLSFKNMCKLRPLLQKWVEEADNNENLQEICKAETLVQARKRKRTSIENRVRGNLENLFLQCPKPTLQQISHIAQQLGLEKDVVRVWFCNRRQKGKRSSSDYAQREDFEAAGSPFSGGPVSFPLAPGPHFGTPGYGSPHFTALYSSVPFPEGEAFPPVSVTTLGSPMHSN.

Disordered stretches follow at residues 1–51 (MAGH…GPGV) and 88–114 (GGLE…SPEP). The short motif at 4–12 (HLTSDFAFS) is the 9aaTAD element. The residue at position 111 (Ser111) is a Phosphoserine; by MAPK. Lys123 is covalently cross-linked (Glycyl lysine isopeptide (Lys-Gly) (interchain with G-Cter in SUMO)). Positions 138-212 (DIKALQKELE…LLQKWVEEAD (75 aa)) constitute a POU-specific domain. 2 residues coordinate DNA: Arg157 and Gln164. 2 DNA-binding regions span residues 180–186 (SQTTICR) and 193–196 (SFKN). The homeobox DNA-binding region spans 230 to 289 (RKRKRTSIENRVRGNLENLFLQCPKPTLQQISHIAQQLGLEKDVVRVWFCNRRQKGKRSS). A Phosphothreonine modification is found at Thr235. Phosphoserine is present on residues Ser236, Ser289, Ser290, and Ser355.

This sequence belongs to the POU transcription factor family. Class-5 subfamily. In terms of assembly, interacts with PKM. Interacts with WWP2. Interacts with UBE2I and ZSCAN10. Interacts with PCGF1. Interacts with ESRRB; recruits ESRRB near the POU5F1-SOX2 element in the NANOG proximal promoter; the interaction is DNA independent. Interacts with ZNF322. Interacts with MAPK8 and MAPK9; the interaction allows MAPK8 and MAPK9 to phosphorylate POU5F1 on Ser-355. Interacts (when phosphorylated on Ser-355) with FBXW8. Interacts with FBXW4. Interacts with SOX2 and SOX15; binds synergistically with either SOX2 or SOX15 to DNA. Interacts with DDX56. Post-translationally, sumoylation enhances the protein stability, DNA binding and transactivation activity. Sumoylation is required for enhanced YES1 expression. Ubiquitinated; undergoes 'Lys-63'-linked polyubiquitination by WWP2 leading to proteasomal degradation. In terms of processing, ERK1/2-mediated phosphorylation at Ser-111 promotes nuclear exclusion and proteasomal degradation. Phosphorylation at Thr-235 and Ser-236 decrease DNA-binding and alters ability to activate transcription.

Its subcellular location is the cytoplasm. The protein resides in the nucleus. Functionally, transcription factor that binds to the octamer motif (5'-ATTTGCAT-3'). Forms a trimeric complex with SOX2 or SOX15 on DNA and controls the expression of a number of genes involved in embryonic development such as YES1, FGF4, UTF1 and ZFP206. Critical for early embryogenesis and for embryonic stem cell pluripotency. In Pan troglodytes (Chimpanzee), this protein is POU domain, class 5, transcription factor 1 (POU5F1).